A 633-amino-acid polypeptide reads, in one-letter code: GRAM domain-containing protein 4 (633 aa).

3 disordered regions span residues Met1–Arg46, Leu72–Gly109, and Val182–Gly216. Positions Pro27–Arg39 are enriched in basic and acidic residues. Phosphoserine occurs at positions 75 and 79. Residues Ser95 to Asp104 show a composition bias toward basic and acidic residues. Positions His134–Gln190 form a coiled coil. Residues Gln190–Ser205 are compositionally biased toward low complexity. 3 helical membrane-spanning segments follow: residues Val295–Leu315, Thr389–Tyr409, and Leu411–Phe431. The GRAM domain occupies Gly500–Lys578.

Interacts with RTN4 (isoform B).

It localises to the mitochondrion membrane. The protein resides in the endoplasmic reticulum membrane. Plays a role as a mediator of E2F1-induced apoptosis in the absence of p53/TP53. Inhibits TLR9 response to nucelic acids and regulates TLR9-mediated innate immune response. In Mus musculus (Mouse), this protein is GRAM domain-containing protein 4.